The following is a 424-amino-acid chain: Isovaleryl-CoA dehydrogenase, mitochondrial (424 aa).

A mitochondrion-targeting transit peptide spans Met1–Ala30. Residues Lys56, Lys65, and Lys76 each carry the N6-acetyllysine; alternate modification. N6-succinyllysine; alternate occurs at positions 56, 65, and 76. FAD contacts are provided by residues Leu163–Ser172 and Trp196–Thr198. Position 172 (Ser172) interacts with substrate. Residue Ser220–Arg221 participates in substrate binding. Residue Lys239 is modified to N6-acetyllysine. Lys260 is subject to N6-acetyllysine; alternate. N6-succinyllysine; alternate is present on Lys260. Substrate is bound by residues Tyr275 and Asp282–Arg285. The active-site Proton acceptor is Glu284. Arg310 contacts FAD. An N6-succinyllysine modification is found at Lys316. FAD-binding positions include Gln321 and Gln378–Gly382. Position 405–406 (Gly405–Gly406) interacts with substrate. Residue Thr407 to Glu409 coordinates FAD.

The protein belongs to the acyl-CoA dehydrogenase family. Homotetramer. FAD serves as cofactor.

It localises to the mitochondrion matrix. The enzyme catalyses 3-methylbutanoyl-CoA + oxidized [electron-transfer flavoprotein] + H(+) = 3-methylbut-2-enoyl-CoA + reduced [electron-transfer flavoprotein]. The catalysed reaction is pentanoyl-CoA + oxidized [electron-transfer flavoprotein] + H(+) = (2E)-pentenoyl-CoA + reduced [electron-transfer flavoprotein]. It catalyses the reaction hexanoyl-CoA + oxidized [electron-transfer flavoprotein] + H(+) = (2E)-hexenoyl-CoA + reduced [electron-transfer flavoprotein]. It carries out the reaction butanoyl-CoA + oxidized [electron-transfer flavoprotein] + H(+) = (2E)-butenoyl-CoA + reduced [electron-transfer flavoprotein]. The protein operates within amino-acid degradation; L-leucine degradation; (S)-3-hydroxy-3-methylglutaryl-CoA from 3-isovaleryl-CoA: step 1/3. Its function is as follows. Catalyzes the conversion of isovaleryl-CoA/3-methylbutanoyl-CoA to 3-methylbut-2-enoyl-CoA as an intermediate step in the leucine (Leu) catabolic pathway. To a lesser extent, is also able to catalyze the oxidation of other saturated short-chain acyl-CoA thioesters as pentanoyl-CoA, hexenoyl-CoA and butenoyl-CoA. This Rattus norvegicus (Rat) protein is Isovaleryl-CoA dehydrogenase, mitochondrial (Ivd).